Here is a 94-residue protein sequence, read N- to C-terminus: Small ribosomal subunit protein bS6 (94 aa).

Belongs to the bacterial ribosomal protein bS6 family.

Binds together with bS18 to 16S ribosomal RNA. The protein is Small ribosomal subunit protein bS6 of Clostridium botulinum (strain Kyoto / Type A2).